The primary structure comprises 145 residues: Deoxyuridine 5'-triphosphate nucleotidohydrolase (145 aa).

Belongs to the dUTPase family. Mg(2+) is required as a cofactor.

It carries out the reaction dUTP + H2O = dUMP + diphosphate + H(+). This enzyme is involved in nucleotide metabolism: it produces dUMP, the immediate precursor of thymidine nucleotides and it decreases the intracellular concentration of dUTP so that uracil cannot be incorporated into DNA. The protein is Deoxyuridine 5'-triphosphate nucleotidohydrolase (DUT) of Fowlpox virus (strain NVSL) (FPV).